Consider the following 274-residue polypeptide: Large ribosomal subunit protein uL2cz/uL2cy (274 aa).

2 disordered regions span residues 1–23 and 223–274; these read MAIHLYKTSTPSTRNGTVGSQVK and MNPV…RRSK. Residues 7 to 23 show a composition bias toward polar residues; sequence KTSTPSTRNGTVGSQVK.

This sequence belongs to the universal ribosomal protein uL2 family. Part of the 50S ribosomal subunit.

The protein localises to the plastid. It localises to the chloroplast. In Nandina domestica (Heavenly bamboo), this protein is Large ribosomal subunit protein uL2cz/uL2cy (rpl2-A).